The sequence spans 789 residues: Protein translocase subunit SecA 2 (789 aa).

Residues Gln79, 97-101 (GEGKT), and Asp487 contribute to the ATP site.

It belongs to the SecA family. As to quaternary structure, monomer and homodimer. Part of the essential Sec protein translocation apparatus which comprises SecA, SecYEG and auxiliary proteins SecDF. Other proteins may also be involved.

The protein resides in the cell membrane. It is found in the cytoplasm. The enzyme catalyses ATP + H2O + cellular proteinSide 1 = ADP + phosphate + cellular proteinSide 2.. Functionally, part of the Sec protein translocase complex. Interacts with the SecYEG preprotein conducting channel. Has a central role in coupling the hydrolysis of ATP to the transfer of proteins into and across the cell membrane, serving as an ATP-driven molecular motor driving the stepwise translocation of polypeptide chains across the membrane. This chain is Protein translocase subunit SecA 2, found in Pediococcus pentosaceus (strain ATCC 25745 / CCUG 21536 / LMG 10740 / 183-1w).